The following is a 342-amino-acid chain: Methylthioribose-1-phosphate isomerase (342 aa).

Substrate contacts are provided by residues Arg-44 to Ala-46, Arg-87, and Gln-194. The Proton donor role is filled by Asp-235. Asn-245–Lys-246 serves as a coordination point for substrate.

Belongs to the eIF-2B alpha/beta/delta subunits family. MtnA subfamily.

The catalysed reaction is 5-(methylsulfanyl)-alpha-D-ribose 1-phosphate = 5-(methylsulfanyl)-D-ribulose 1-phosphate. The protein operates within amino-acid biosynthesis; L-methionine biosynthesis via salvage pathway; L-methionine from S-methyl-5-thio-alpha-D-ribose 1-phosphate: step 1/6. Functionally, catalyzes the interconversion of methylthioribose-1-phosphate (MTR-1-P) into methylthioribulose-1-phosphate (MTRu-1-P). This Acetivibrio thermocellus (strain ATCC 27405 / DSM 1237 / JCM 9322 / NBRC 103400 / NCIMB 10682 / NRRL B-4536 / VPI 7372) (Clostridium thermocellum) protein is Methylthioribose-1-phosphate isomerase.